Reading from the N-terminus, the 330-residue chain is D-lactate dehydrogenase (330 aa).

Residues 156–157 (RI), aspartate 176, 206–207 (VP), 233–235 (AAR), and aspartate 259 contribute to the NAD(+) site. Residue arginine 235 is part of the active site. Residue glutamate 264 is part of the active site. Residue histidine 296 is the Proton donor of the active site.

The protein belongs to the D-isomer specific 2-hydroxyacid dehydrogenase family.

The catalysed reaction is (R)-lactate + NAD(+) = pyruvate + NADH + H(+). In Staphylococcus aureus (strain Mu50 / ATCC 700699), this protein is D-lactate dehydrogenase (ldhD).